A 277-amino-acid chain; its full sequence is uncharacterized protein (277 aa).

4 consecutive transmembrane segments (helical) span residues 37–59 (YLRY…LYIW), 63–82 (LIFG…PKVI), 214–236 (MLCG…KTYI), and 246–268 (WITS…TYLF).

It is found in the cell membrane. This is an uncharacterized protein from Bacillus anthracis.